We begin with the raw amino-acid sequence, 267 residues long: Small ribosomal subunit protein uS5 (267 aa).

The segment at 1-37 (MADEAPARSGFRGGFGSRGGRGGRGRGRGRWARGRGK) is disordered. Over residues 11-20 (FRGGFGSRGG) the composition is skewed to gly residues. Over residues 21–34 (RGGRGRGRGRWARG) the composition is skewed to basic residues. Phosphoserine is present on Ser60. The 64-residue stretch at 85–148 (LKDEVLKIMP…ILAKLSVVPV (64 aa)) folds into the S5 DRBM domain.

Belongs to the universal ribosomal protein uS5 family.

Component of the ribosome, a large ribonucleoprotein complex responsible for the synthesis of proteins in the cell. The small ribosomal subunit (SSU) binds messenger RNAs (mRNAs) and translates the encoded message by selecting cognate aminoacyl-transfer RNA (tRNA) molecules. The large subunit (LSU) contains the ribosomal catalytic site termed the peptidyl transferase center (PTC), which catalyzes the formation of peptide bonds, thereby polymerizing the amino acids delivered by tRNAs into a polypeptide chain. The nascent polypeptides leave the ribosome through a tunnel in the LSU and interact with protein factors that function in enzymatic processing, targeting, and the membrane insertion of nascent chains at the exit of the ribosomal tunnel. Plays a role in the assembly and function of the 40S ribosomal subunit. Mutations in this protein affects the control of translational fidelity. Involved in nucleolar processing of pre-18S ribosomal RNA and ribosome assembly. Has a specific developmental role during oogenesis. In Drosophila melanogaster (Fruit fly), this protein is Small ribosomal subunit protein uS5 (RpS2).